The chain runs to 366 residues: uncharacterized protein (366 aa).

This is an uncharacterized protein from Methanocaldococcus jannaschii (strain ATCC 43067 / DSM 2661 / JAL-1 / JCM 10045 / NBRC 100440) (Methanococcus jannaschii).